The following is a 317-amino-acid chain: tRNA dimethylallyltransferase (317 aa).

Position 14–21 (14–21) interacts with ATP; it reads GPTASGKT. 16 to 21 contributes to the substrate binding site; it reads TASGKT. Interaction with substrate tRNA regions lie at residues 39-42 and 163-167; these read DSAL and QRIQR.

This sequence belongs to the IPP transferase family. As to quaternary structure, monomer. It depends on Mg(2+) as a cofactor.

The catalysed reaction is adenosine(37) in tRNA + dimethylallyl diphosphate = N(6)-dimethylallyladenosine(37) in tRNA + diphosphate. Catalyzes the transfer of a dimethylallyl group onto the adenine at position 37 in tRNAs that read codons beginning with uridine, leading to the formation of N6-(dimethylallyl)adenosine (i(6)A). The polypeptide is tRNA dimethylallyltransferase (Stenotrophomonas maltophilia (strain R551-3)).